A 263-amino-acid chain; its full sequence is MPPLLASTSSTSPLLLASRLRGGGGCGCGGAPLLHRTRRGFLAPSTTTTQTTRTSFAAMSWLGKLGLGGLGGSPRASAASAALAQGPDEDRPAAGNEFAQFGAGCFWGVELAFQRVPGVTRTEVGYSQGNLHDPTYEDVCTGATYHNEVVRVHYDVSACKFDDLLDVFWARHDPTTPNRQGNDVGTQYRSGIYYYTPEQEKAARESLEKQQKLLNRTIVTEILPAKRFYRAEEYHQQYLAKGGRFGFRQSAEKGCNDPIRCYG.

The transit peptide at Met1 to Arg75 directs the protein to the chloroplast.

This sequence belongs to the MsrA Met sulfoxide reductase family. As to expression, expressed in roots, stems, leaves and flowers.

Its subcellular location is the plastid. It localises to the chloroplast. The enzyme catalyses L-methionyl-[protein] + [thioredoxin]-disulfide + H2O = L-methionyl-(S)-S-oxide-[protein] + [thioredoxin]-dithiol. It carries out the reaction [thioredoxin]-disulfide + L-methionine + H2O = L-methionine (S)-S-oxide + [thioredoxin]-dithiol. In terms of biological role, catalyzes the reduction of methionine sulfoxide (MetSO) to methionine in proteins. Involved in abiotic and salt stress responses. Plays a protective role against oxidative stress by restoring activity to proteins that have been inactivated by methionine oxidation. MSRA family specifically reduces the MetSO S-enantiomer. The polypeptide is Peptide methionine sulfoxide reductase A4, chloroplastic (Oryza sativa subsp. japonica (Rice)).